Reading from the N-terminus, the 1004-residue chain is NADH:acrylate oxidoreductase (1004 aa).

Thr455 carries the FMN phosphoryl threonine modification. FAD contacts are provided by Ala508, Glu527, Asn535, Thr536, Gly540, Gly541, and Asp775. Arg834 acts as the Proton donor in catalysis. The FAD site is built by His941, Glu970, Ala985, and Leu986.

The protein belongs to the FAD-dependent oxidoreductase 2 family. FRD/SDH subfamily. The cofactor is FAD. It depends on FMN as a cofactor. In terms of processing, is flavinylated on Thr-455 by ApbE, encoded in a neighboring gene. Flavinylation is essential for catalytic activity.

The enzyme catalyses acrylate + NADH + H(+) = propanoate + NAD(+). Its function is as follows. Catalyzes the NADH-dependent reduction of acrylate to propanoate. The principal role of ARD in Vibrio seems to be the energy-saving detoxification of acrylate coming from the environment. May also use acrylate as the terminal electron acceptor for NADH regeneration at oxygen deficiency. NADPH cannot replace NADH as the electron donor. Is also able to reduce methacrylate in vitro, but with a much lower efficiency. The polypeptide is NADH:acrylate oxidoreductase (Vibrio harveyi (Beneckea harveyi)).